A 359-amino-acid chain; its full sequence is 3-dehydroquinate synthase (359 aa).

NAD(+)-binding positions include D71–K76, G105–D109, T129–T130, K142, K151, and C169–T172. Zn(2+) contacts are provided by E184, H247, and H264.

Belongs to the sugar phosphate cyclases superfamily. Dehydroquinate synthase family. Co(2+) is required as a cofactor. Zn(2+) serves as cofactor. It depends on NAD(+) as a cofactor.

The protein resides in the cytoplasm. It carries out the reaction 7-phospho-2-dehydro-3-deoxy-D-arabino-heptonate = 3-dehydroquinate + phosphate. It functions in the pathway metabolic intermediate biosynthesis; chorismate biosynthesis; chorismate from D-erythrose 4-phosphate and phosphoenolpyruvate: step 2/7. Catalyzes the conversion of 3-deoxy-D-arabino-heptulosonate 7-phosphate (DAHP) to dehydroquinate (DHQ). In Shewanella sp. (strain W3-18-1), this protein is 3-dehydroquinate synthase.